The chain runs to 680 residues: MRKFNSHSIPIRLNLLFSIVILLFMTIIGRLLYMQVLNKDFYEKKLASASQTKITSSSARGEIYDASGKPLVENTLKQVVSFTRSNKMTATDLKETAKKLLTYVSISSPNLTERQLADYYLADPEIYKKIVEALPSEKRLDSDGNRLSESELYNNAVDSVQTSQLNYTEDEKKEIYLFSQLNAVGNFATGTIATDPLNDSQVAVIASISKEMPGISISTSWDRKVLETSLSSIVGSVSSEKAGLPAEEAEAYLKKGYSLNDRVGTSYLEKQYEETLQGKRSVKEIHLDKYGNMESVDTIEEGSKGNNIKLTIDLAFQDSVDALLKSYFNSELENGGAKYSEGVYAVALNPKTGAVLSMSGIKHDLKTGELTPDSLGTVTNVFVPGSVVKAATISSGWENGVLSGNQTLTDQSIVFQGSAPINSWYTQAYGSFPITAVQALEYSSNTYMVQTALGLMGQTYQPNMFVGTSNLESAMEKLRSTFGEYGLGTATGIDLPDESTGFVPKEYSFANYITNAFGQFDNYTPMQLAQYVATIANNGVRVAPRIVEGIYGNNDKGGLGDLIQQLQPTEMNKVNISDSDMSILHQGFYQVAHGTSGLTTGRAFSNGALVSISGKTGTAESYVADGQQATNTNAVAYAPSDNPQIAVAVVFPHNTNLTNGVGPSIARDIINLYQKYHPMN.

Residues 1-8 (MRKFNSHS) are Cytoplasmic-facing. Residues 9–29 (IPIRLNLLFSIVILLFMTIIG) form a helical membrane-spanning segment. Topologically, residues 30-680 (RLLYMQVLNK…NLYQKYHPMN (651 aa)) are extracellular. The active-site Acyl-ester intermediate is the Ser386.

It belongs to the transpeptidase family. Interacts with MreC in the elongasome.

The protein localises to the cell membrane. Its function is as follows. A transpeptidase that forms peptide cross-links between adjacent glycan strands in cell wall peptidoglycan (PG). Part of the elongasome machinery that synthesizes peripheral PG. The chain is Penicillin-binding protein 2B from Streptococcus pneumoniae serotype 2 (strain D39 / NCTC 7466).